The following is a 499-amino-acid chain: Calcium/calmodulin-dependent protein kinase type II subunit delta (499 aa).

Ala2 carries the post-translational modification N-acetylalanine. The Protein kinase domain occupies 14–272 (YQLFEELGKG…ASEALKHPWI (259 aa)). Residues 20 to 28 (LGKGAFSVV) and Lys43 each bind ATP. Residue Asp136 is the Proton acceptor of the active site. Residues 283–292 (HRQETVDCLK) are autoinhibitory domain. Thr287 is subject to Phosphothreonine; by autocatalysis. The segment at 291–301 (LKKFNARRKLK) is calmodulin-binding. Phosphothreonine; by autocatalysis occurs at positions 306 and 307. At Ser315 the chain carries Phosphoserine. At Lys318 the chain carries N6-acetyllysine. A phosphoserine mark is found at Ser319 and Ser330. Thr331 carries the phosphothreonine modification. A Phosphoserine modification is found at Ser333. Phosphothreonine occurs at positions 336 and 337. Phosphoserine is present on residues Ser404, Ser490, and Ser494.

This sequence belongs to the protein kinase superfamily. CAMK Ser/Thr protein kinase family. CaMK subfamily. In terms of assembly, CAMK2 is composed of 4 different chains: alpha (CAMK2A), beta (CAMK2B), gamma (CAMK2G), and delta (CAMK2D). The different isoforms assemble into homo- or heteromultimeric holoenzymes composed of 12 subunits with two hexameric rings stacked one on top of the other. Interacts with RRAD and CACNB2. Autophosphorylation of Thr-287 following activation by Ca(2+)/calmodulin. Phosphorylation of Thr-287 locks the kinase into an activated state. Expressed in cardiac muscle and skeletal muscle. Isoform Delta 3, isoform Delta 2, isoform Delta 8 and isoform Delta 9 are expressed in cardiac muscle. Isoform Delta 11 is expressed in skeletal muscle.

The protein resides in the cell membrane. It localises to the sarcolemma. Its subcellular location is the sarcoplasmic reticulum membrane. The catalysed reaction is L-seryl-[protein] + ATP = O-phospho-L-seryl-[protein] + ADP + H(+). It catalyses the reaction L-threonyl-[protein] + ATP = O-phospho-L-threonyl-[protein] + ADP + H(+). Activated by Ca(2+)/calmodulin. Binding of calmodulin results in conformational change that relieves intrasteric autoinhibition and allows autophosphorylation of Thr-287 which turns the kinase in a constitutively active form and confers to the kinase a Ca(2+)-independent activity. Functionally, calcium/calmodulin-dependent protein kinase involved in the regulation of Ca(2+) homeostatis and excitation-contraction coupling (ECC) in heart by targeting ion channels, transporters and accessory proteins involved in Ca(2+) influx into the myocyte, Ca(2+) release from the sarcoplasmic reticulum (SR), SR Ca(2+) uptake and Na(+) and K(+) channel transport. Targets also transcription factors and signaling molecules to regulate heart function. In its activated form, is involved in the pathogenesis of dilated cardiomyopathy and heart failure. Contributes to cardiac decompensation and heart failure by regulating SR Ca(2+) release via direct phosphorylation of RYR2 Ca(2+) channel on 'Ser-2808'. In the nucleus, phosphorylates the MEF2 repressor HDAC4, promoting its nuclear export and binding to 14-3-3 protein, and expression of MEF2 and genes involved in the hypertrophic program. Is essential for left ventricular remodeling responses to myocardial infarction. In pathological myocardial remodeling acts downstream of the beta adrenergic receptor signaling cascade to regulate key proteins involved in ECC. Regulates Ca(2+) influx to myocytes by binding and phosphorylating the L-type Ca(2+) channel subunit beta-2 CACNB2. In addition to Ca(2+) channels, can target and regulate the cardiac sarcolemmal Na(+) channel Nav1.5/SCN5A and the K+ channel Kv4.3/KCND3, which contribute to arrhythmogenesis in heart failure. Phosphorylates phospholamban (PLN/PLB), an endogenous inhibitor of SERCA2A/ATP2A2, contributing to the enhancement of SR Ca(2+) uptake that may be important in frequency-dependent acceleration of relaxation (FDAR) and maintenance of contractile function during acidosis. May participate in the modulation of skeletal muscle function in response to exercise, by regulating SR Ca(2+) transport through phosphorylation of PLN/PLB and triadin, a ryanodine receptor-coupling factor. In response to interferon-gamma (IFN-gamma) stimulation, catalyzes phosphorylation of STAT1, stimulating the JAK-STAT signaling pathway. In Homo sapiens (Human), this protein is Calcium/calmodulin-dependent protein kinase type II subunit delta (CAMK2D).